We begin with the raw amino-acid sequence, 188 residues long: Large ribosomal subunit protein eL18 (188 aa).

A Glycyl lysine isopeptide (Lys-Gly) (interchain with G-Cter in SUMO2) cross-link involves residue Lys119. Position 130 is a phosphoserine (Ser130). A disordered region spans residues 150–188; that stretch reads RHFGKAPGTPHSHTKPYVRSKGRKFERARGRRASRGYKN. Residue Thr158 is modified to Phosphothreonine. Composition is skewed to basic residues over residues 161-171 and 178-188; these read SHTKPYVRSKG and RGRRASRGYKN. Residue Lys164 forms a Glycyl lysine isopeptide (Lys-Gly) (interchain with G-Cter in SUMO2) linkage.

It belongs to the eukaryotic ribosomal protein eL18 family. Component of the large ribosomal subunit.

Its subcellular location is the cytoplasm. It is found in the cytosol. The protein resides in the rough endoplasmic reticulum. Its function is as follows. Component of the large ribosomal subunit. The ribosome is a large ribonucleoprotein complex responsible for the synthesis of proteins in the cell. The polypeptide is Large ribosomal subunit protein eL18 (RPL18) (Bos taurus (Bovine)).